A 269-amino-acid polypeptide reads, in one-letter code: Formamidopyrimidine-DNA glycosylase (269 aa).

The active-site Schiff-base intermediate with DNA is the Pro2. Glu3 acts as the Proton donor in catalysis. Catalysis depends on Lys57, which acts as the Proton donor; for beta-elimination activity. DNA-binding residues include His90, Arg109, and Arg150. An FPG-type zinc finger spans residues 235–269 (QVYGRAGEACLTCGTTIKRSKHGQRTTFYCPHCQR). The active-site Proton donor; for delta-elimination activity is the Arg259.

Belongs to the FPG family. Monomer. It depends on Zn(2+) as a cofactor.

The catalysed reaction is Hydrolysis of DNA containing ring-opened 7-methylguanine residues, releasing 2,6-diamino-4-hydroxy-5-(N-methyl)formamidopyrimidine.. The enzyme catalyses 2'-deoxyribonucleotide-(2'-deoxyribose 5'-phosphate)-2'-deoxyribonucleotide-DNA = a 3'-end 2'-deoxyribonucleotide-(2,3-dehydro-2,3-deoxyribose 5'-phosphate)-DNA + a 5'-end 5'-phospho-2'-deoxyribonucleoside-DNA + H(+). Functionally, involved in base excision repair of DNA damaged by oxidation or by mutagenic agents. Acts as a DNA glycosylase that recognizes and removes damaged bases. Has a preference for oxidized purines, such as 7,8-dihydro-8-oxoguanine (8-oxoG). Has AP (apurinic/apyrimidinic) lyase activity and introduces nicks in the DNA strand. Cleaves the DNA backbone by beta-delta elimination to generate a single-strand break at the site of the removed base with both 3'- and 5'-phosphates. The chain is Formamidopyrimidine-DNA glycosylase from Edwardsiella ictaluri (strain 93-146).